We begin with the raw amino-acid sequence, 310 residues long: Beta-carotene 3-hydroxylase 1, chloroplastic (310 aa).

A chloroplast-targeting transit peptide spans 1 to 51 (MAAGLSTAVTFKPLHRSFSSSSTDFRLRLPKSLSGFSPSLRFKRFSVCYVV). Transmembrane regions (helical) follow at residues 98 to 118 (YLIA…MAVY) and 132 to 152 (MLEM…MEFW). Residues 145 to 272 (AAVGMEFWAR…KFNGVPYGLF (128 aa)) enclose the Fatty acid hydroxylase domain. The Histidine box-1 motif lies at 157–162 (HRALWH). The short motif at 169–173 (HESHH) is the Histidine box-2 element. The next 2 membrane-spanning stretches (helical) occupy residues 183–203 (NDVF…YGFF) and 208–228 (VPGL…AYMF). A Histidine box-3 motif is present at residues 230–235 (HDGLVH). The Histidine box-4 signature appears at 256–260 (HQLHH).

The protein belongs to the sterol desaturase family. As to quaternary structure, homodimer. In terms of tissue distribution, expressed in leaves, flowers, stems, roots and siliques.

It is found in the plastid. Its subcellular location is the chloroplast membrane. It carries out the reaction all-trans-beta-carotene + 4 reduced [2Fe-2S]-[ferredoxin] + 2 O2 + 4 H(+) = all-trans-zeaxanthin + 4 oxidized [2Fe-2S]-[ferredoxin] + 2 H2O. Functionally, nonheme diiron monooxygenase involved in the biosynthesis of xanthophylls. Specific for beta-ring hydroxylations of beta-carotene. Also has a low activity toward the beta- and epsilon-rings of alpha-carotene. No activity with acyclic carotenoids such as lycopene and neurosporene. Uses ferredoxin as an electron donor. This is Beta-carotene 3-hydroxylase 1, chloroplastic (BETA-OHASE 1) from Arabidopsis thaliana (Mouse-ear cress).